Here is a 324-residue protein sequence, read N- to C-terminus: Thiazole synthase (324 aa).

The active-site Schiff-base intermediate with DXP is Lys-167. 1-deoxy-D-xylulose 5-phosphate is bound by residues Gly-228, 254–255 (AG), and 276–277 (NT).

The protein belongs to the ThiG family. Homotetramer. Forms heterodimers with either ThiH or ThiS.

It is found in the cytoplasm. The enzyme catalyses [ThiS sulfur-carrier protein]-C-terminal-Gly-aminoethanethioate + 2-iminoacetate + 1-deoxy-D-xylulose 5-phosphate = [ThiS sulfur-carrier protein]-C-terminal Gly-Gly + 2-[(2R,5Z)-2-carboxy-4-methylthiazol-5(2H)-ylidene]ethyl phosphate + 2 H2O + H(+). It functions in the pathway cofactor biosynthesis; thiamine diphosphate biosynthesis. Functionally, catalyzes the rearrangement of 1-deoxy-D-xylulose 5-phosphate (DXP) to produce the thiazole phosphate moiety of thiamine. Sulfur is provided by the thiocarboxylate moiety of the carrier protein ThiS. In vitro, sulfur can be provided by H(2)S. The sequence is that of Thiazole synthase from Paramagnetospirillum magneticum (strain ATCC 700264 / AMB-1) (Magnetospirillum magneticum).